The sequence spans 85 residues: Putative membrane protein insertion efficiency factor (85 aa).

The protein belongs to the UPF0161 family.

The protein localises to the cell inner membrane. Its function is as follows. Could be involved in insertion of integral membrane proteins into the membrane. The chain is Putative membrane protein insertion efficiency factor from Phenylobacterium zucineum (strain HLK1).